We begin with the raw amino-acid sequence, 951 residues long: Sodium/potassium exporting P-type ATPase 1 (951 aa).

The Cytoplasmic portion of the chain corresponds to 1 to 57 (MMGANSTEWHGQSVEQVTELLGTDVERGLKESVVGQLQKQFGPNELKGQRGVNPWKV). The chain crosses the membrane as a helical span at residues 58-78 (LLAQFTNGLTVILLIATVVSF). Topologically, residues 79 to 82 (AVQD) are extracellular. A helical transmembrane segment spans residues 83-103 (HAEGGVLAFVIIFNASVGFVQ). At 104 to 247 (EYRAEKTMDA…TPMQKRLNRM (144 aa)) the chain is on the cytoplasmic side. The helical transmembrane segment at 248-268 (AYILFGISLVLAVIVFAVNKF) threads the bilayer. Over 269–273 (EFNTD) the chain is Extracellular. A helical transmembrane segment spans residues 274-294 (IIIYAVSLGIAVIPEGLIAVI). Residues 295-717 (TIVMALGVRR…GRRIFSNIRK (423 aa)) lie on the Cytoplasmic side of the membrane. The active-site 4-aspartylphosphate intermediate is Asp-330. Mg(2+) is bound by residues Asp-330 and Thr-332. The ATP site is built by Thr-332, Glu-414, Lys-467, Arg-511, Thr-575, Gly-576, Asp-577, Arg-636, and Lys-642. Position 661 (Asp-661) interacts with Mg(2+). Asn-664 is an ATP binding site. Residues 718-738 (FILHLVSTNVGEVIVLIIGLA) traverse the membrane as a helical segment. Residues 739 to 743 (FKDRN) are Extracellular-facing. The chain crosses the membrane as a helical span at residues 744–764 (GVSVFPLAPVQILFMNMVTST). At 765-799 (PPAMALGVEAASKDTMKVPPHTKGLFGKEVLADMM) the chain is on the cytoplasmic side. A helical transmembrane segment spans residues 800–820 (VYGIIMGSLILVDWVLVIYAF). The Extracellular segment spans residues 821 to 840 (GDSQLGLECNSDRMLNECNT). A helical membrane pass occupies residues 841–861 (VFRARSTIMVALIWMLLLHAY). Over 862–885 (NCRHPRASLFTAEGGGASKLFSNR) the chain is Cytoplasmic. The helical transmembrane segment at 886-906 (LLVWSVLLGSLMPIPTVYIPT) threads the bilayer. Residues 907–916 (LNTKIFKQET) lie on the Extracellular side of the membrane. Residues 917–937 (ISWEWSIVVVSVVAFFFLSEL) traverse the membrane as a helical segment. Residues 938–951 (YKLIKRNVMTSRVI) are Cytoplasmic-facing.

It belongs to the cation transport ATPase (P-type) (TC 3.A.3) family. Type IID subfamily. Requires Mg(2+) as cofactor. Post-translationally, the active site is phosphorylated in presence of sodium or potassium and in conditions of higher pH. Not phosphorylated in presence of calcium ions.

Its subcellular location is the cell membrane. It carries out the reaction Na(+)(in) + ATP + H2O = Na(+)(out) + ADP + phosphate + H(+). The enzyme catalyses K(+)(in) + ATP + H2O = K(+)(out) + ADP + phosphate + H(+). Functionally, catalyzes the hydrolysis of ATP coupled with the export of sodium and potassium from the cell. Appears to export potassium more efficiently than sodium. May transport other cations such as lithium. Sodium/potassium efflux ATPases are involved in salt tolerance and maintaining the membrane potential across the plasma membrane in high salinity (Na+) or alkaline (K+) environments. The sequence is that of Sodium/potassium exporting P-type ATPase 1 from Marchantia polymorpha (Common liverwort).